Reading from the N-terminus, the 580-residue chain is MLLDDKILDIFGFFRNAIEERIRAVWSGDNIPESLFKRIIVGPPAQPKHGDLYTNAALILGKFDKKNPMELASTLCNAFENIEGIESINVVAPGFINFHCVNSVWHGVVRNINKLGREYGRTDLGHNKKVNIEFVSANPTGPLHIGHARGAVFGDVLSNLLKWVGYDVIKEYYVNDAGSQVKTLVSSVFLRYKEALGEEITIGAGLYPGEYLKPIARDLVEKYGSDLLNASDKDEIIRSFTLSSMLNLIKEDLALLGVEHDVFVSESDLQNRNVIEECVKYLRERGIIYEGVLEKPKREDELSEWQPRVQMLFKSTEFGDDSDRALQKEDGTWSYFAGDIGYHFHKISRGFDSMIMTLGFDHKGYVSRLKAAVAALSNGKASIDIKLYNLVNFLENGTPVKMSKRKGEFLTVRDVIDEVGRDVARFMMLTRRNDVVLDFDFAKAREESKDSQIFYIQYAHARIRSIVRRCPELLAIEKIDFSCVITEQELSLLRLLSRWPSVIKTSAENYEPHTIAFYLIEVAEAFHALWGCGNSDPSMRFIVEGDLHTTSARIYIAIAVSHVIASGLDIFSITPSEEMR.

The short motif at 137–147 is the 'HIGH' region element; that stretch reads ANPTGPLHIGH.

It belongs to the class-I aminoacyl-tRNA synthetase family. As to quaternary structure, monomer.

Its subcellular location is the cytoplasm. It catalyses the reaction tRNA(Arg) + L-arginine + ATP = L-arginyl-tRNA(Arg) + AMP + diphosphate. This chain is Arginine--tRNA ligase, found in Anaplasma phagocytophilum (strain HZ).